The sequence spans 574 residues: Ankyrin repeat protein B18 (574 aa).

ANK repeat units follow at residues Thr-56–Met-87, Ile-135–Phe-164, Asp-167–Ala-213, Cys-217–Ile-249, His-253–Glu-285, and Glu-327–Ala-356. Residues Asn-541–Val-574 form the F-box domain.

This Vaccinia virus (strain Ankara) (VACV) protein is Ankyrin repeat protein B18.